The sequence spans 410 residues: Multidrug resistance protein MdtM (410 aa).

The Cytoplasmic portion of the chain corresponds to 1 to 11; that stretch reads MPRFFARHAAT. The helical transmembrane segment at 12-32 threads the bilayer; it reads LFFPMALILYDFAAYLSTDLI. The Periplasmic portion of the chain corresponds to 33 to 48; sequence QPGIINVVRDFNADVS. A helical transmembrane segment spans residues 49 to 69; that stretch reads LAPAAVSLYLAGGMALQWLLG. The Cytoplasmic segment spans residues 70 to 78; that stretch reads PLSDRIGRK. Residues 79-99 form a helical membrane-spanning segment; the sequence is PVLITGALIFTLACAATMFTT. Topologically, residues 100-103 are periplasmic; the sequence is SMTQ. A helical transmembrane segment spans residues 104 to 124; that stretch reads FLIARAIQGTSICFIATVGYV. Topologically, residues 125–140 are cytoplasmic; the sequence is TVQEAFGQTKGIKLMA. A helical transmembrane segment spans residues 141–161; sequence IITSIVLIAPIIGPLSGAALM. Residues 162-167 lie on the Periplasmic side of the membrane; it reads HFVHWK. The helical transmembrane segment at 168–188 threads the bilayer; the sequence is VLFAIIAVMGFISFVGLLLAM. Residues 189-216 are Cytoplasmic-facing; that stretch reads PETVKRGAVPFSAKSVLRDFRNVFCNRL. The chain crosses the membrane as a helical span at residues 217-237; the sequence is FLFGAATISLSYIPMMSWVAV. Over 238-251 the chain is Periplasmic; it reads SPVILIDAGGLTTS. Residues 252-272 form a helical membrane-spanning segment; sequence QFAWTQVPVFGAVIVANAIVA. The Cytoplasmic segment spans residues 273–282; sequence RFVKDPTEPR. The chain crosses the membrane as a helical span at residues 283 to 303; sequence FIWRAVPIQLVGLALLIIGNL. Residues 304-307 lie on the Periplasmic side of the membrane; the sequence is LSPH. Residues 308–328 traverse the membrane as a helical segment; it reads VWLWSVLGTSLYAFGIGLIFP. Topologically, residues 329–348 are cytoplasmic; it reads TLFRFTLFSNNLPKGTVSAS. A helical transmembrane segment spans residues 349–369; that stretch reads LNMVILMVMSVSVEIGRWLWF. At 370-373 the chain is on the periplasmic side; the sequence is NGGR. The chain crosses the membrane as a helical span at residues 374-394; it reads LPFHLLAVVAGVIVVFTLAGL. The Cytoplasmic portion of the chain corresponds to 395–410; it reads LNRVRQHQAAELAEEQ.

The protein belongs to the major facilitator superfamily.

Its subcellular location is the cell inner membrane. In terms of biological role, proton-dependent efflux pump. Confers resistance to a broad spectrum of chemically unrelated substrates. The chain is Multidrug resistance protein MdtM (mdtM) from Escherichia coli O157:H7.